The chain runs to 253 residues: Flagellar brake protein YcgR (253 aa).

The PilZ domain maps to 120–239; sequence QRRDFYRFAT…NEGLINRYVY (120 aa).

The protein belongs to the YcgR family. As to quaternary structure, monomer. Interacts with the flagellar basal bodies.

It localises to the bacterial flagellum basal body. Acts as a flagellar brake, regulating swimming and swarming in a bis-(3'-5') cyclic diguanylic acid (c-di-GMP)-dependent manner. Binds 1 c-di-GMP dimer per subunit. Increasing levels of c-di-GMP lead to decreased motility. The polypeptide is Flagellar brake protein YcgR (Methylotenera mobilis (strain JLW8 / ATCC BAA-1282 / DSM 17540)).